The chain runs to 227 residues: Urease subunit gamma/beta (227 aa).

Positions 1–101 are urease gamma; that stretch reads MRLTPTERDR…LAVVADPVGG (101 aa). The urease beta stretch occupies residues 102–227; sequence GGLGDDAPGA…AACGYLGADR (126 aa).

The protein in the N-terminal section; belongs to the urease gamma subunit family. In the C-terminal section; belongs to the urease beta subunit family. As to quaternary structure, heterohexamer of 3 UreC (alpha) and 3 UreAB (gamma/beta) subunits.

It is found in the cytoplasm. It catalyses the reaction urea + 2 H2O + H(+) = hydrogencarbonate + 2 NH4(+). It functions in the pathway nitrogen metabolism; urea degradation; CO(2) and NH(3) from urea (urease route): step 1/1. The protein is Urease subunit gamma/beta of Streptomyces coelicolor (strain ATCC BAA-471 / A3(2) / M145).